The following is a 102-amino-acid chain: Small ribosomal subunit protein uS10 (102 aa).

Belongs to the universal ribosomal protein uS10 family. In terms of assembly, part of the 30S ribosomal subunit.

Involved in the binding of tRNA to the ribosomes. This Syntrophus aciditrophicus (strain SB) protein is Small ribosomal subunit protein uS10.